A 450-amino-acid polypeptide reads, in one-letter code: Ribulose bisphosphate carboxylase large chain (450 aa).

The residue at position 4 (K4) is an N6,N6,N6-trimethyllysine. Substrate is bound by residues N113 and T163. K165 acts as the Proton acceptor in catalysis. K167 provides a ligand contact to substrate. Mg(2+) is bound by residues K191, D193, and E194. K191 carries the N6-carboxylysine modification. H284 (proton acceptor) is an active-site residue. The substrate site is built by R285, H317, and S369.

It belongs to the RuBisCO large chain family. Type I subfamily. Heterohexadecamer of 8 large chains and 8 small chains; disulfide-linked. The disulfide link is formed within the large subunit homodimers. Mg(2+) is required as a cofactor. The disulfide bond which can form in the large chain dimeric partners within the hexadecamer appears to be associated with oxidative stress and protein turnover.

The protein localises to the plastid. Its subcellular location is the chloroplast. It carries out the reaction 2 (2R)-3-phosphoglycerate + 2 H(+) = D-ribulose 1,5-bisphosphate + CO2 + H2O. The catalysed reaction is D-ribulose 1,5-bisphosphate + O2 = 2-phosphoglycolate + (2R)-3-phosphoglycerate + 2 H(+). Its function is as follows. RuBisCO catalyzes two reactions: the carboxylation of D-ribulose 1,5-bisphosphate, the primary event in carbon dioxide fixation, as well as the oxidative fragmentation of the pentose substrate in the photorespiration process. Both reactions occur simultaneously and in competition at the same active site. This Sedum rubrotinctum (Jelly bean plant) protein is Ribulose bisphosphate carboxylase large chain.